A 336-amino-acid polypeptide reads, in one-letter code: Potassium channel subfamily K member 1 (336 aa).

Over 1 to 20 (MLQSLAGSSCVRLVERHRSA) the chain is Cytoplasmic. A helical transmembrane segment spans residues 21–41 (WCFGFLVLGYLLYLVFGAVVF). Residues 42–103 (SSVELPYEDL…SNASGNWNWD (62 aa)) are Extracellular-facing. Asparagine 95 carries N-linked (GlcNAc...) asparagine glycosylation. Residues 104–116 (FTSALFFASTVLS) constitute an intramembrane region (helical). The stretch at 117-122 (TTGYGH) is an intramembrane region. Residues 117–122 (TTGYGH) are selectivity filter 1. Residues 123 to 132 (TVPLSDGGKA) lie on the Extracellular side of the membrane. The chain crosses the membrane as a helical span at residues 133 to 156 (FCIIYSVIGIPFTLLFLTAVVQRV). The Cytoplasmic portion of the chain corresponds to 157–181 (TVHVTRRPVLYFHIRWGFSKQVVAI). Residues 182 to 202 (VHAVLLGFVTVSCFFFIPAAV) form a helical membrane-spanning segment. Topologically, residues 203-211 (FSVLEDDWN) are extracellular. An intramembrane region (helical) is located at residues 212-224 (FLESFYFCFISLS). The selectivity filter 2 stretch occupies residues 225–230 (TIGLGD). The stretch at 225–231 (TIGLGDY) is an intramembrane region. Residues 232–243 (VPGEGYNQKFRE) lie on the Extracellular side of the membrane. Residues 244–267 (LYKIGITCYLLLGLIAMLVVLETF) form a helical membrane-spanning segment. The Cytoplasmic portion of the chain corresponds to 268–336 (CELHELKKFR…PPYEDGSANH (69 aa)). Lysine 274 is covalently cross-linked (Glycyl lysine isopeptide (Lys-Gly) (interchain with G-Cter in SUMO)). Residues 293 to 299 (IMEHDQL) form an important for intracellular retention in recycling endosomes region. The segment at 310 to 336 (GLKEEQKQNEPFVASQSPPYEDGSANH) is disordered. Serine 326 carries the post-translational modification Phosphoserine.

This sequence belongs to the two pore domain potassium channel (TC 1.A.1.8) family. In terms of assembly, homodimer; disulfide-linked. Heterodimer with KCNK2; disulfide-linked. In astrocytes, forms mostly heterodimeric potassium channels with KCNK2, with only a minor proportion of functional channels containing homodimeric KCNK1. Interacts with KCNK3 and KCNK9, forming functional heterodimeric channels. Interacts with GNG4. Identified in a complex with PSD and ARF6; interacts only with PSD that is bound to ARF6. Interacts with UBE2I. In terms of processing, sumoylation is controversial. Sumoylated by UBE2I. Not sumoylated when expressed in xenopus oocytes or mammalian cells. Sumoylation inactivates the channel, but does not interfere with expression at the cell membrane. Sumoylation of a single subunit is sufficient to silence the dimeric channel. Sumoylation of KCNK1 is sufficient to silence heterodimeric channels formed by KCNK1 and KCNK3 or KCNK9. Desumoylated by SENP1; this activates the channel. Desumoylated by SENP1; this strongly increases halothane-mediated activation of heterodimeric channels formed with KCNK9. SENP1 treatment has no effect. As to expression, detected in brain and in kidney cortex and medulla, especially at the renal brush border membranes of the proximal convoluted tubules, in distal tubules and on intercalated cells of the collecting duct. Detected in cerebellum granule neurons. Detected in astrocytes in hippocampus stratum radiatum. Highly expressed in the stria vascularis in the cochlea. Detected in neurons in Scarpa's ganglion in the inner ear, at nerve terminals in the crista ampullaris, in supporting cells and dark cells, but not in hair cells (at protein level). Detected in the brain cerebellar granule cell layer, amygdala, thalamus reticular nucleus, habenula, mesencephalic trigeminal neurons, neocortex and piriform cortex, and at lower levels in the olfactory bulb. Detected in Scarpa's ganglia and crista ampullaris in the inner ear.

The protein localises to the cell membrane. It localises to the recycling endosome. The protein resides in the apical cell membrane. It is found in the cytoplasmic vesicle. Its subcellular location is the perikaryon. The protein localises to the cell projection. It localises to the dendrite. The protein resides in the synaptic cell membrane. It carries out the reaction K(+)(in) = K(+)(out). The catalysed reaction is NH4(+)(in) = NH4(+)(out). The enzyme catalyses Na(+)(in) = Na(+)(out). It catalyses the reaction Rb(+)(in) = Rb(+)(out). It carries out the reaction Cs(+)(in) = Cs(+)(out). The catalysed reaction is Li(+)(in) = Li(+)(out). The enzyme catalyses L-glutamate(out) = L-glutamate(in). It catalyses the reaction chloride(in) = chloride(out). Its activity is regulated as follows. Inhibited by 100 uM quinine. Slightly inhibited by Ba(+). Activity is first increased and then decreased when the extracellular pH is lowered to 6.0. In terms of biological role, ion channel that contributes to passive transmembrane potassium transport and to the regulation of the resting membrane potential in brain astrocytes, but also in kidney and in other tissues. Forms dimeric channels through which potassium ions pass in accordance with their electrochemical gradient. The channel is selective for K(+) ions at physiological potassium concentrations and at neutral pH, but becomes permeable to Na(+) at subphysiological K(+) levels and upon acidification of the extracellular medium. The homodimer has very low potassium channel activity, when expressed in heterologous systems, and can function as weakly inward rectifying potassium channel. Channel activity is modulated by activation of serotonin receptors. Heterodimeric channels containing KCNK1 and KCNK2 have much higher activity, and may represent the predominant form in astrocytes. Heterodimeric channels containing KCNK1 and KCNK3 or KCNK9 have much higher activity. Heterodimeric channels formed by KCNK1 and KCNK9 may contribute to halothane-sensitive currents. Mediates outward rectifying potassium currents in dentate gyrus granule cells and contributes to the regulation of their resting membrane potential. Contributes to the regulation of action potential firing in dentate gyrus granule cells and down-regulates their intrinsic excitability. Contributes to the regulation of the resting membrane potential of pancreatic beta cells. In astrocytes, the heterodimer formed by KCNK1 and KCNK2 is required for rapid glutamate release in response to activation of G-protein coupled receptors, such as F2R and CNR1. Required for normal ion and water transport in the kidney. The low channel activity of homodimeric KCNK1 may be due to sumoylation. The low channel activity may be due to rapid internalization from the cell membrane and retention in recycling endosomes. Permeable to monovalent cations with ion selectivity for K(+) &gt; Rb(+) &gt;&gt; NH4(+) &gt;&gt; Cs(+) = Na(+) = Li(+). This chain is Potassium channel subfamily K member 1, found in Rattus norvegicus (Rat).